A 506-amino-acid polypeptide reads, in one-letter code: Glutamate--tRNA ligase (506 aa).

The 'HIGH' region motif lies at 12-22; it reads PSPTGDPHVGT. A 'KMSKS' region motif is present at residues 253–257; it reads KLSKR. Lysine 256 is an ATP binding site.

It belongs to the class-I aminoacyl-tRNA synthetase family. Glutamate--tRNA ligase type 1 subfamily. In terms of assembly, monomer.

The protein resides in the cytoplasm. The catalysed reaction is tRNA(Glu) + L-glutamate + ATP = L-glutamyl-tRNA(Glu) + AMP + diphosphate. In terms of biological role, catalyzes the attachment of glutamate to tRNA(Glu) in a two-step reaction: glutamate is first activated by ATP to form Glu-AMP and then transferred to the acceptor end of tRNA(Glu). This is Glutamate--tRNA ligase from Chlamydia muridarum (strain MoPn / Nigg).